The primary structure comprises 311 residues: Probable deoxyhypusine synthase (311 aa).

Lys-284 serves as the catalytic Nucleophile.

It belongs to the deoxyhypusine synthase family. NAD(+) is required as a cofactor.

It carries out the reaction [eIF5A protein]-L-lysine + spermidine = [eIF5A protein]-deoxyhypusine + propane-1,3-diamine. Its pathway is protein modification; eIF5A hypusination. In terms of biological role, catalyzes the NAD-dependent oxidative cleavage of spermidine and the subsequent transfer of the butylamine moiety of spermidine to the epsilon-amino group of a specific lysine residue of the eIF-5A precursor protein to form the intermediate deoxyhypusine residue. The protein is Probable deoxyhypusine synthase of Picrophilus torridus (strain ATCC 700027 / DSM 9790 / JCM 10055 / NBRC 100828 / KAW 2/3).